A 189-amino-acid polypeptide reads, in one-letter code: Probable nicotinate-nucleotide adenylyltransferase (189 aa).

It belongs to the NadD family.

The catalysed reaction is nicotinate beta-D-ribonucleotide + ATP + H(+) = deamido-NAD(+) + diphosphate. Its pathway is cofactor biosynthesis; NAD(+) biosynthesis; deamido-NAD(+) from nicotinate D-ribonucleotide: step 1/1. Functionally, catalyzes the reversible adenylation of nicotinate mononucleotide (NaMN) to nicotinic acid adenine dinucleotide (NaAD). The sequence is that of Probable nicotinate-nucleotide adenylyltransferase from Staphylococcus aureus (strain bovine RF122 / ET3-1).